We begin with the raw amino-acid sequence, 160 residues long: uncharacterized protein (160 aa).

Its subcellular location is the mitochondrion. This is an uncharacterized protein from Arabidopsis thaliana (Mouse-ear cress).